A 660-amino-acid polypeptide reads, in one-letter code: F-box/LRR-repeat protein 5 (660 aa).

The segment at 1–157 is hemerythrin-like; sequence MAPFPDEVDL…IKKKVIAQHC (157 aa). The Fe(3+) site is built by histidine 15, histidine 57, glutamate 58, glutamate 61, histidine 80, histidine 124, and glutamate 127. Residues 200-246 form the F-box domain; sequence SASICNLPPEVMLNIFSYLNPQDLCRCSQVNTKWAQLARTGSLWRHL. The disordered stretch occupies residues 283–305; sequence YQEWDEDADIDESEETGEDDPSI. The span at 285–303 shows a compositional bias: acidic residues; that stretch reads EWDEDADIDESEETGEDDP. LRR repeat units follow at residues 311–337, 338–362, 363–389, 390–417, 551–576, 577–604, 605–630, and 631–649; these read EKELLNSLVHYILPYIGHSVKTLVLAY, SSATSNKVIRQILEYCPNMEHLDLT, QTDISDSAFNGWCFGACQTLRHIDLSG, CEKITDSALEKLSVALGMPLAHKKRLLK, IRDICPGSAKLDQQVARVLQFLSLSG, CHQITDHGLRVLTIGGGLPNLEHLNLSG, CLNVTGSGLQDLVSACPSLNDEHFYY, and CDNISGPHAATASGCQNLQ. The [2Fe-2S] cluster site is built by cysteine 631, cysteine 645, cysteine 655, and cysteine 656.

As to quaternary structure, part of a SCF (SKP1-cullin-F-box) protein ligase complex. [2Fe-2S] cluster is required as a cofactor. Post-translationally, ubiquitinated upon iron and oxygen depletion, leading to its degradation by the proteasome. Ubiquitination is regulated by the hemerythrin-like region that acts as an oxygen and iron sensor.

The protein resides in the cytoplasm. The protein localises to the perinuclear region. It is found in the nucleus. The protein operates within protein modification; protein ubiquitination. Its function is as follows. Component of some SCF (SKP1-cullin-F-box) protein ligase complex that plays a central role in iron homeostasis by promoting the ubiquitination and subsequent degradation of ireb2/irp2. Upon high iron and oxygen level, it specifically recognizes and binds ireb2/irp2, promoting its ubiquitination and degradation by the proteasome. This Xenopus tropicalis (Western clawed frog) protein is F-box/LRR-repeat protein 5 (fbxl5).